The chain runs to 314 residues: Epithelial cell adhesion molecule (314 aa).

Positions 1–23 (MAPPQVLAFGLLLAAATAAVAAA) are cleaved as a signal peptide. Residues 24–265 (QQGCVCENYK…PPEFSMQGLQ (242 aa)) lie on the Extracellular side of the membrane. Intrachain disulfides connect Cys-27-Cys-46, Cys-29-Cys-59, Cys-38-Cys-48, Cys-66-Cys-99, Cys-110-Cys-116, and Cys-118-Cys-135. The N-linked (GlcNAc...) asparagine glycan is linked to Asn-37. Positions 63–135 (ASKCLVMKAE…RTDKDSEISC (73 aa)) constitute a Thyroglobulin type-1 domain. The N-linked (GlcNAc...) asparagine glycan is linked to Asn-111. N-linked (GlcNAc...) asparagine glycosylation occurs at Asn-198. A helical membrane pass occupies residues 266–288 (AGIIAVIAVVAIAIVAGIIVLIV). Topologically, residues 289 to 314 (STKKRRAKYEKAEIKEMGEMHRELNA) are cytoplasmic.

Belongs to the EPCAM family. Monomer. Interacts with phosphorylated CLDN7. In terms of processing, glycosylation at Asn-198 is crucial for protein stability.

Its subcellular location is the lateral cell membrane. It localises to the cell junction. It is found in the tight junction. In terms of biological role, may act as a physical homophilic interaction molecule between intestinal epithelial cells (IECs) and intraepithelial lymphocytes (IELs) at the mucosal epithelium for providing immunological barrier as a first line of defense against mucosal infection. Plays a role in embryonic stem cells proliferation and differentiation. Up-regulates the expression of FABP5, MYC and cyclins A and E. The sequence is that of Epithelial cell adhesion molecule (TACSTD1) from Sus scrofa (Pig).